Reading from the N-terminus, the 215-residue chain is Ribosomal RNA small subunit methyltransferase G (215 aa).

S-adenosyl-L-methionine contacts are provided by residues glycine 73, leucine 78, 125-126 (AE), and arginine 140.

It belongs to the methyltransferase superfamily. RNA methyltransferase RsmG family.

Its subcellular location is the cytoplasm. Functionally, specifically methylates the N7 position of guanine in position 518 of 16S rRNA. This is Ribosomal RNA small subunit methyltransferase G from Renibacterium salmoninarum (strain ATCC 33209 / DSM 20767 / JCM 11484 / NBRC 15589 / NCIMB 2235).